Consider the following 389-residue polypeptide: tRNA-specific 2-thiouridylase MnmA (389 aa).

Residues 30-37 (GLSGGVDS) and L56 contribute to the ATP site. C117 (nucleophile) is an active-site residue. C117 and C216 are joined by a disulfide. Residue G142 coordinates ATP. The segment at 166–168 (KDQ) is interaction with tRNA. C216 (cysteine persulfide intermediate) is an active-site residue. Residues 321-322 (RY) form an interaction with tRNA region.

It belongs to the MnmA/TRMU family.

The protein localises to the cytoplasm. The catalysed reaction is S-sulfanyl-L-cysteinyl-[protein] + uridine(34) in tRNA + AH2 + ATP = 2-thiouridine(34) in tRNA + L-cysteinyl-[protein] + A + AMP + diphosphate + H(+). Catalyzes the 2-thiolation of uridine at the wobble position (U34) of tRNA, leading to the formation of s(2)U34. The protein is tRNA-specific 2-thiouridylase MnmA of Synechococcus sp. (strain CC9902).